We begin with the raw amino-acid sequence, 942 residues long: UvrABC system protein A (942 aa).

32–39 (GLSGSGKS) is an ATP binding site. A C4-type zinc finger spans residues 251–278 (CPVCGFTVPELEPRLFSFNAPFGSCPTC). 2 consecutive ABC transporter domains span residues 308-589 (WNPI…KKSI) and 609-937 (GNGR…HYLK). 641 to 648 (GVSGSGKS) serves as a coordination point for ATP. The C4-type zinc-finger motif lies at 740 to 766 (CEACSGDGIIKIEMHFLPDVYVPCEVC).

It belongs to the ABC transporter superfamily. UvrA family. In terms of assembly, forms a heterotetramer with UvrB during the search for lesions.

It localises to the cytoplasm. Functionally, the UvrABC repair system catalyzes the recognition and processing of DNA lesions. UvrA is an ATPase and a DNA-binding protein. A damage recognition complex composed of 2 UvrA and 2 UvrB subunits scans DNA for abnormalities. When the presence of a lesion has been verified by UvrB, the UvrA molecules dissociate. This chain is UvrABC system protein A, found in Streptococcus pyogenes serotype M18 (strain MGAS8232).